A 1086-amino-acid polypeptide reads, in one-letter code: MTDRSSNEGVVLNKENYPFPRRNGSIHGEITDVKRRRLSERNGYGDKKGSSSKEKTSSFEDELAEYASQLDQDEIKSSKDQQWQRPALPAINPEKDDIYFQQIDSEEFTEGSVPSIRLFGVTDNGNSILVHVVGFLPYFYVKAPVGFRPEMLERFTQDLDATCNGGVIDHCIIEMKENLYGFQGNEKSPFIKIFTTNPRILSRARNVFERGEFNFEELFPVGVGVTTFESNTQYLLRFMIDCDVVGMNWIHLPASKYQFRYQNRVSNCQIEAWINYKDLISLPAEGQWSKMAPLRIMSFDIECAGRKGVFPDPSIDPVIQIASIVTQYGDSTPFVRNVFCVDTCSQIVGTQVYEFQNQAEMLSSWSKFVRDVDPDVLIGYNICNFDIPYLLDRAKSLRIHNFPLLGRIHNFFSVAKETTFSSKAYGTRESKTTSIPGRLQLDMLQVMQRDFKLRSYSLNAVCSQFLGEQKEDVHYSIITDLQNGTADSRRRLAIYCLKDAYLPQRLMDKLMCFVNYTEMARVTGVPFNFLLARGQQIKVISQLFRKALQHDLVVPNIRVNGTDEQYEGATVIEPIKGYYDTPIATLDFSSLYPSIMQAHNLCYTTLLDSNTAELLKLKQDVDYSVTPNGDYFVKPHVRKGLLPIILADLLNARKKAKADLKKETDPFKKAVLDGRQLALKVSANSVYGFTGATNGRLPCLAISSSVTSYGRQMIEKTKDVVEKRYRIENGYSHDAVVIYGDTDSVMVKFGVKTLPEAMKLGEEAANYVSDQFPNPIKLEFEKVYFPYLLISKKRYAGLFWTRTDTYDKMDSKGIETVRRDNCPLVSYVIDTALRKMLIDQDVEGAQLFTKKVISDLLQNKIDMSQLVITKALSKTDYAAKMAHVELAERMRKRDAGSAPAIGDRVAYVIIKGAQGDQFYMRSEDPIYVLENNIPIDAKYYLENQLSKPLLRIFEPILGEKASSLLHGDHTRTISMAAPSVGGIMKFAVKVETCLGCKAPIKKGKTALCENCLNRSAELYQRQVAQVNDLEVRFARLWTQCQRCQGSMHQDVICTSRDCPIFYMRIAEHKKLQQSVDLLKRFDEMSW.

Positions 1–64 are disordered; that stretch reads MTDRSSNEGV…KTSSFEDELA (64 aa). The span at 29-58 shows a compositional bias: basic and acidic residues; it reads EITDVKRRRLSERNGYGDKKGSSSKEKTSS. Cys-993, Cys-996, Cys-1008, and Cys-1011 together coordinate Zn(2+). A CysA-type zinc finger spans residues 993–1011; the sequence is CLGCKAPIKKGKTALCENC. 4 residues coordinate [4Fe-4S] cluster: Cys-1040, Cys-1043, Cys-1053, and Cys-1058. The CysB motif signature appears at 1040–1058; it reads CQRCQGSMHQDVICTSRDC.

The protein belongs to the DNA polymerase type-B family. As to quaternary structure, heterotetramer that consist of the pol3, cdc1, cdc27 and cdm1 subunits. The pol3 subunit contains the polymerase active site and most likely the active site for the 3'-5' exonuclease activity. It depends on [4Fe-4S] cluster as a cofactor.

It is found in the nucleus. It carries out the reaction DNA(n) + a 2'-deoxyribonucleoside 5'-triphosphate = DNA(n+1) + diphosphate. In terms of biological role, catalytic component of DNA polymerase delta (DNA polymerase III) which participates in chromosomal DNA replication. Required during synthesis of the lagging DNA strands at the replication fork, binds at/or near replication origins and moves along DNA with the replication fork. Participates in leading strand synthesis during replication initiation and termination. Has 3'-5' proofreading exonuclease activity that corrects errors arising during DNA replication. The chain is DNA polymerase delta catalytic subunit (pol3) from Schizosaccharomyces pombe (strain 972 / ATCC 24843) (Fission yeast).